A 260-amino-acid chain; its full sequence is Exosome complex component Rrp4 (260 aa).

The S1 motif domain occupies 59-128; that stretch reads NDVVIGVVIV…SSMKIELALR (70 aa). In terms of domain architecture, KH spans 136–194; that stretch reads RTGQIVEVEPVKVPRVIGHGGSMISMLKKETNCSIFVGQNGRIWIDGKDEDIELLSKAL.

This sequence belongs to the RRP4 family. As to quaternary structure, component of the archaeal exosome complex. Forms a trimer of Rrp4 and/or Csl4 subunits. The trimer associates with a hexameric ring-like arrangement composed of 3 Rrp41-Rrp42 heterodimers.

The protein resides in the cytoplasm. In terms of biological role, non-catalytic component of the exosome, which is a complex involved in RNA degradation. Increases the RNA binding and the efficiency of RNA degradation. Confers strong poly(A) specificity to the exosome. This chain is Exosome complex component Rrp4, found in Methanosarcina mazei (strain ATCC BAA-159 / DSM 3647 / Goe1 / Go1 / JCM 11833 / OCM 88) (Methanosarcina frisia).